A 44-amino-acid chain; its full sequence is Protein PsbN (44 aa).

The chain crosses the membrane as a helical span at residues F7 to G29.

It belongs to the PsbN family.

It is found in the plastid. The protein localises to the chloroplast thylakoid membrane. May play a role in photosystem I and II biogenesis. The chain is Protein PsbN from Pleurastrum terricola (Filamentous green alga).